The primary structure comprises 75 residues: Conotoxin TsMEKL-011 (75 aa).

The first 19 residues, Met1–Ala19, serve as a signal peptide directing secretion. Residues Leu20–Arg45 constitute a propeptide that is removed on maturation. 3 cysteine pairs are disulfide-bonded: Cys49-Cys63, Cys56-Cys67, and Cys62-Cys71.

Belongs to the conotoxin O2 superfamily. As to expression, expressed by the venom duct.

The protein localises to the secreted. This Conus tessulatus (Tessellate cone) protein is Conotoxin TsMEKL-011.